A 1453-amino-acid chain; its full sequence is Collagen alpha-1(I) chain (1453 aa).

The first 22 residues, 1 to 22 (MFSFVDLRLLLLLGATALLTHG), serve as a signal peptide directing secretion. Positions 23-151 (QEDIPEVSCI…PPGLGGNFAS (129 aa)) are cleaved as a propeptide — N-terminal propeptide. Residues 29–87 (VSCIHNGLRVPNGETWKPEVCLICICHNGTAVCDDVQCNEELDCPNPQRREGECCAFCP) form the VWFC domain. Residue Asn56 is glycosylated (N-linked (GlcNAc...) asparagine). The interval 94-1210 (NSEDVGVEGP…GGRYYRADDA (1117 aa)) is disordered. 2 stretches are compositionally biased toward pro residues: residues 109-118 (PQGPRGPVGP) and 128-143 (PGLP…PGPP). Residues 152–167 (QMSYGYDEKSAGVSVP) form a nonhelical region (N-terminal) region. At Lys160 the chain carries Allysine. Ser161 bears the Phosphoserine mark. Residues 168-1181 (GPMGPSGPRG…PGPPGPPGPP (1014 aa)) form a triple-helical region region. 11 positions are modified to 4-hydroxyproline: Pro179, Pro182, Pro185, Pro194, Pro197, Pro200, Pro215, Pro230, Pro236, Pro245, and Pro251. Gly residues predominate over residues 198-207 (GEPGGSGPMG). A compositionally biased stretch (basic and acidic residues) spans 218–232 (NGDDGEAGKPGRPGE). Position 254 is a 5-hydroxylysine; alternate (Lys254). Residue Lys254 is glycosylated (O-linked (Gal...) hydroxylysine; alternate). The residue at position 260 (Ser260) is a Phosphoserine. Over residues 268 to 284 (DAGPAGPKGEPGSPGEN) the composition is skewed to low complexity. 4-hydroxyproline occurs at positions 278, 281, 287, 296, and 302. Low complexity predominate over residues 307 to 320 (TAGARGNDGAVGAA). The segment covering 322–334 (PPGPTGPTGPPGF) has biased composition (pro residues). Residues Pro323, Pro332, Pro335, Pro362, Pro365, Pro377, Pro383, Pro392, Pro398, Pro401, and Pro416 each carry the 4-hydroxyproline modification. The span at 368-407 (AGAAGPAGNPGADGQPGAKGANGAPGIAGAPGFPGARGPS) shows a compositional bias: low complexity. Lys419 is subject to 5-hydroxylysine. 4-hydroxyproline occurs at positions 425, 428, 440, 449, 464, 470, 479, and 485. Over residues 474–483 (GERGGPGSRG) the composition is skewed to gly residues. Residue Lys494 is modified to 5-hydroxylysine. The span at 499–515 (ERGAPGPAGPKGSPGEA) shows a compositional bias: low complexity. Residues Pro503, Pro512, Pro518, Pro524, Pro533, Pro536, Pro545, Pro554, Pro560, Pro572, Pro581, Pro590, Pro593, Pro611, Pro629, Pro635, Pro641, Pro647, Pro653, Pro659, Pro671, Pro680, Pro692, Pro704, Pro707, Pro713, Pro719, and Pro728 each carry the 4-hydroxyproline modification. Residues 527-566 (KGLTGSPGSPGPDGKTGPPGPAGQDGRPGPAGPPGARGQA) show a composition bias toward low complexity. Residues 623-650 (QGPAGSPGFQGLPGPAGPPGEAGKPGEQ) are compositionally biased toward low complexity. Low complexity-rich tracts occupy residues 685-695 (PRGNNGAPGND) and 703-716 (APGA…PGLQ). The short motif at 734–736 (RGD) is the Cell attachment site element. Lys740 carries the 5-hydroxylysine modification. A 4-hydroxyproline mark is found at Pro746, Pro761, and Pro767. Ser776 is subject to Phosphoserine. 4-hydroxyproline occurs at positions 788, 797, 806, 812, 830, 839, and 848. The segment covering 800-815 (AGFAGPPGADGQPGAK) has biased composition (low complexity). Over residues 829–841 (PPGPAGPAGPPGP) the composition is skewed to pro residues. Low complexity predominate over residues 842 to 872 (IGNVGAPGPKGPRGAAGPPGATGFPGAAGRV). At Lys851 the chain carries 5-hydroxylysine. Pro860 and Pro866 each carry 4-hydroxyproline. The residue at position 874 (Pro874) is a 3-hydroxyproline. A 4-hydroxyproline mark is found at Pro875, Pro884, Pro887, Pro908, Pro917, Pro926, Pro935, Pro953, Pro962, Pro965, Pro971, Pro986, Pro992, Pro998, Pro1007, and Pro1013. Positions 901–910 (ETGPAGRPGE) are enriched in low complexity. Residues 920-935 (AGEKGSPGADGPAGSP) are compositionally biased toward low complexity. Residues 985-995 (PPGPMGPPGLA) show a composition bias toward pro residues. Over residues 997–1012 (PPGESGREGSPGAEGS) the composition is skewed to low complexity. Lys1022 bears the 5-hydroxylysine mark. Residues 1031–1046 (AGPPGAPGAPGAPGPV) show a composition bias toward pro residues. 4-hydroxyproline occurs at positions 1034, 1037, and 1040. Low complexity predominate over residues 1067-1081 (IGPAGARGPAGPQGP). Positions 1082-1084 (RGD) match the Cell attachment site motif. The segment covering 1082–1096 (RGDKGETGEQGDRGI) has biased composition (basic and acidic residues). Lys1085 bears the 5-hydroxylysine mark. Lys1097 is modified (5-hydroxylysine; alternate). A glycan (O-linked (Gal...) hydroxylysine; alternate) is linked at Lys1097. Residues 1102–1148 (FSGLQGPPGSPGSPGEQGPSGASGPAGPRGPPGSAGSPGKDGLNGLP) show a composition bias toward low complexity. 5 positions are modified to 4-hydroxyproline: Pro1109, Pro1112, Pro1115, Pro1133, and Pro1148. Pro1153 is subject to 3-hydroxyproline. The residue at position 1154 (Pro1154) is a 4-hydroxyproline. Residues 1166–1181 (AGPPGPPGPPGPPGPP) show a composition bias toward pro residues. Pro1168 carries the 3-hydroxyproline modification. Pro1169 is modified (4-hydroxyproline). 3-hydroxyproline is present on Pro1171. The residue at position 1172 (Pro1172) is a 4-hydroxyproline. Pro1174 is subject to 3-hydroxyproline. 4-hydroxyproline occurs at positions 1175, 1178, and 1181. Residues 1182–1207 (SGGYDFSFLPQPPQEKSQDGGRYYRA) form a nonhelical region (C-terminal) region. The residue at position 1197 (Lys1197) is an Allysine. The segment covering 1197–1210 (KSQDGGRYYRADDA) has biased composition (basic and acidic residues). Residues 1208-1453 (DDANVVRDRD…GLDIGPACFV (246 aa)) constitute a propeptide, C-terminal propeptide. The Fibrillar collagen NC1 domain maps to 1218–1453 (LEVDTTLKSL…GLDIGPACFV (236 aa)). 3 disulfide bridges follow: Cys1248-Cys1280, Cys1288-Cys1451, and Cys1359-Cys1404. Positions 1266, 1268, 1269, 1271, and 1274 each coordinate Ca(2+). Asn1354 is a glycosylation site (N-linked (GlcNAc...) asparagine).

It belongs to the fibrillar collagen family. As to quaternary structure, trimers of one alpha 2(I) and two alpha 1(I) chains. Interacts with MRC2. Interacts with TRAM2. Interacts with MFAP4 in a Ca (2+)-dependent manner. In terms of processing, contains mostly 4-hydroxyproline. Proline residues at the third position of the tripeptide repeating unit (G-X-Y) are hydroxylated in some or all of the chains. Contains 3-hydroxyproline at a few sites. This modification occurs on the first proline residue in the sequence motif Gly-Pro-Hyp, where Hyp is 4-hydroxyproline. Post-translationally, lysine residues at the third position of the tripeptide repeating unit (G-X-Y) are 5-hydroxylated in some or all of the chains. In terms of processing, O-glycosylated on hydroxylated lysine residues. The O-linked glycan consists of a Glc-Gal disaccharide. In terms of tissue distribution, forms the fibrils of tendon, ligaments and bones. In bones the fibrils are mineralized with calcium hydroxyapatite.

The protein localises to the secreted. The protein resides in the extracellular space. It localises to the extracellular matrix. Functionally, type I collagen is a member of group I collagen (fibrillar forming collagen). The protein is Collagen alpha-1(I) chain of Mus musculus (Mouse).